The sequence spans 156 residues: Cytochrome c-type biogenesis protein CcmE 1 (156 aa).

Residues 1–8 (MNATRRQR) lie on the Cytoplasmic side of the membrane. A helical; Signal-anchor for type II membrane protein membrane pass occupies residues 9–29 (LWWVICVLTAAALAVTLIVFA). At 30 to 156 (LQRNMSYLFT…ATATPLTAPR (127 aa)) the chain is on the periplasmic side. Heme is bound by residues H123 and Y127. Residues 137 to 156 (AEGHAGKPIPATATPLTAPR) form a disordered region. Positions 146–156 (PATATPLTAPR) are enriched in low complexity.

This sequence belongs to the CcmE/CycJ family.

It localises to the cell inner membrane. Functionally, heme chaperone required for the biogenesis of c-type cytochromes. Transiently binds heme delivered by CcmC and transfers the heme to apo-cytochromes in a process facilitated by CcmF and CcmH. In Xanthomonas euvesicatoria pv. vesicatoria (strain 85-10) (Xanthomonas campestris pv. vesicatoria), this protein is Cytochrome c-type biogenesis protein CcmE 1.